The chain runs to 72 residues: MSKDDVIEVEGTVVENLPNAMFRVELPNGHRVLAHVSGKIRMHFIRILPGDRVTVELSPYDLTRGRIVYRYK.

The region spanning 1–72 is the S1-like domain; the sequence is MSKDDVIEVE…TRGRIVYRYK (72 aa).

This sequence belongs to the IF-1 family. Component of the 30S ribosomal translation pre-initiation complex which assembles on the 30S ribosome in the order IF-2 and IF-3, IF-1 and N-formylmethionyl-tRNA(fMet); mRNA recruitment can occur at any time during PIC assembly.

Its subcellular location is the cytoplasm. Functionally, one of the essential components for the initiation of protein synthesis. Stabilizes the binding of IF-2 and IF-3 on the 30S subunit to which N-formylmethionyl-tRNA(fMet) subsequently binds. Helps modulate mRNA selection, yielding the 30S pre-initiation complex (PIC). Upon addition of the 50S ribosomal subunit IF-1, IF-2 and IF-3 are released leaving the mature 70S translation initiation complex. The protein is Translation initiation factor IF-1 2 of Symbiobacterium thermophilum (strain DSM 24528 / JCM 14929 / IAM 14863 / T).